The primary structure comprises 1017 residues: Probable calcium-transporting ATPase 8, plasma membrane-type (1017 aa).

The Cytoplasmic segment spans residues 1–153 (MEKLDRYLQE…FVWDAFQDMT (153 aa)). 2 consecutive transmembrane segments (helical) span residues 154–174 (LIIL…TEGW) and 177–197 (GMYD…VTAV). Residues 198–228 (SDYKQSLQFKELDNEKKKIFIHVTRDGRRQK) are Cytoplasmic-facing. A run of 2 helical transmembrane segments spans residues 229–249 (ISIY…DQVP) and 331–351 (VATV…LVLL). At 352–384 (VRFLIDKGMTVGLLKWYSTDALTIVNYFATAVT) the chain is on the cytoplasmic side. A helical transmembrane segment spans residues 385–405 (IIVVAVPEGLPLAVTLSLAFA). Catalysis depends on Asp-434, which acts as the 4-aspartylphosphate intermediate. Positions 736 and 740 each coordinate Mg(2+). Residues 803 to 823 (IVALVINFVSACITGSAPLTA) form a helical membrane-spanning segment. At 824–825 (VQ) the chain is on the cytoplasmic side. The next 2 membrane-spanning stretches (helical) occupy residues 826 to 846 (LLWV…TEPP) and 875 to 895 (SLYQ…LLNI). Over 896-938 (KGADSKSIINTLIFNSFVFCQVFNEINSREMQKINVFRGIISN) the chain is Cytoplasmic. A run of 2 helical transmembrane segments spans residues 939–959 (WIFI…IEFL) and 973–993 (WLLS…LKCI). The Cytoplasmic segment spans residues 994-1017 (PVGSGETSATPNGYRPLANGPDDI).

Belongs to the cation transport ATPase (P-type) (TC 3.A.3) family. Type IIB subfamily.

It localises to the membrane. The enzyme catalyses Ca(2+)(in) + ATP + H2O = Ca(2+)(out) + ADP + phosphate + H(+). With respect to regulation, activated by calmodulin. Its function is as follows. This magnesium-dependent enzyme catalyzes the hydrolysis of ATP coupled with the translocation of calcium from the cytosol out of the cell, into the endoplasmic reticulum, or into organelles. The polypeptide is Probable calcium-transporting ATPase 8, plasma membrane-type (Oryza sativa subsp. japonica (Rice)).